We begin with the raw amino-acid sequence, 556 residues long: Formate--tetrahydrofolate ligase (556 aa).

65–72 serves as a coordination point for ATP; that stretch reads TPAGEGKS.

Belongs to the formate--tetrahydrofolate ligase family.

It catalyses the reaction (6S)-5,6,7,8-tetrahydrofolate + formate + ATP = (6R)-10-formyltetrahydrofolate + ADP + phosphate. It functions in the pathway one-carbon metabolism; tetrahydrofolate interconversion. This Streptococcus agalactiae serotype III (strain NEM316) protein is Formate--tetrahydrofolate ligase.